Reading from the N-terminus, the 299-residue chain is ATP phosphoribosyltransferase (299 aa).

Belongs to the ATP phosphoribosyltransferase family. Long subfamily. Mg(2+) is required as a cofactor.

Its subcellular location is the cytoplasm. The enzyme catalyses 1-(5-phospho-beta-D-ribosyl)-ATP + diphosphate = 5-phospho-alpha-D-ribose 1-diphosphate + ATP. It functions in the pathway amino-acid biosynthesis; L-histidine biosynthesis; L-histidine from 5-phospho-alpha-D-ribose 1-diphosphate: step 1/9. With respect to regulation, feedback inhibited by histidine. Catalyzes the condensation of ATP and 5-phosphoribose 1-diphosphate to form N'-(5'-phosphoribosyl)-ATP (PR-ATP). Has a crucial role in the pathway because the rate of histidine biosynthesis seems to be controlled primarily by regulation of HisG enzymatic activity. The chain is ATP phosphoribosyltransferase from Campylobacter jejuni subsp. jejuni serotype O:23/36 (strain 81-176).